Consider the following 416-residue polypeptide: Ferrochelatase, mitochondrial (416 aa).

Residues Met-1 to Arg-47 constitute a mitochondrion transit peptide. Positions Glu-41–Thr-62 are disordered. At Lys-50 the chain carries N6-acetyllysine. The protoporphyrin IX site is built by Arg-108, Tyr-116, and Ser-123. The residue at position 131 (Lys-131) is an N6-succinyllysine. Residue Cys-189 coordinates [2Fe-2S] cluster. His-223 is a catalytic residue. Position 283 is an N6-acetyllysine; alternate (Lys-283). An N6-succinyllysine; alternate modification is found at Lys-283. The active site involves Asp-376. Positions 396, 399, and 404 each coordinate [2Fe-2S] cluster. Lys-408 carries the post-translational modification N6-acetyllysine; alternate. Lys-408 carries the post-translational modification N6-succinyllysine; alternate.

This sequence belongs to the ferrochelatase family. Homodimer. Homotetramer. Interaction with PGRMC1; the interaction results in decreased FECH activity. Interacts with ABCB10 and SLC25A37; this interaction forms an oligomeric complex. Forms a complex with ABCB7 and ABCB10, where a dimeric FECH bridges ABCB7 and ABCB10 homodimers; this complex may be required for cellular iron homeostasis, mitochondrial function and heme biosynthesis. Interacts with ABCB7 and ABCB10. Requires [2Fe-2S] cluster as cofactor.

The protein localises to the mitochondrion inner membrane. The catalysed reaction is heme b + 2 H(+) = protoporphyrin IX + Fe(2+). Its pathway is porphyrin-containing compound metabolism; protoheme biosynthesis; protoheme from protoporphyrin-IX: step 1/1. Functionally, catalyzes the ferrous insertion into protoporphyrin IX and participates in the terminal step in the heme biosynthetic pathway. This Bos taurus (Bovine) protein is Ferrochelatase, mitochondrial.